Here is an 88-residue protein sequence, read N- to C-terminus: MTANEKSVRTETGKVVSDKMDKSIVVLVERRVKHPLYGKYVKRSSKLHAHDENNECRIGDTVQVQESRPLSKTKSWKLVNIVERAEKV.

This sequence belongs to the universal ribosomal protein uS17 family. As to quaternary structure, part of the 30S ribosomal subunit.

Its function is as follows. One of the primary rRNA binding proteins, it binds specifically to the 5'-end of 16S ribosomal RNA. This chain is Small ribosomal subunit protein uS17, found in Hahella chejuensis (strain KCTC 2396).